The primary structure comprises 269 residues: Integral membrane protein 2C (269 aa).

T39 carries the phosphothreonine modification. A helical; Signal-anchor for type II membrane protein membrane pass occupies residues 57-77; sequence VGGVCYLSMGMVVLLMGLVFA. In terms of domain architecture, BRICHOS spans 138 to 232; sequence FGGGDPADII…LCNGKDTYRL (95 aa). A disulfide bridge connects residues C165 and C224. A glycan (N-linked (GlcNAc...) asparagine) is linked at N171.

This sequence belongs to the ITM2 family. As to quaternary structure, interacts with BACE1. Interacts with APP. Interacts with STMN2. In terms of processing, type I membrane-bound, as well as soluble, furin has a pre-eminent role in ITM2C proteolytic processing. PCSK7 and PCSK5 may also be involved although to a lesser extent. The soluble form of PCSK7 is incapable of processing ITM2C. Fails to undergo shedding by ADAM10 and intramembrane cleavage by SPPL2B.

The protein resides in the lysosome membrane. It localises to the cell membrane. Its function is as follows. Negative regulator of amyloid-beta peptide production. May inhibit the processing of APP by blocking its access to alpha- and beta-secretase. Binding to the beta-secretase-cleaved APP C-terminal fragment is negligible, suggesting that ITM2C is a poor gamma-secretase cleavage inhibitor. May play a role in TNF-induced cell death and neuronal differentiation. The sequence is that of Integral membrane protein 2C (Itm2c) from Mus musculus (Mouse).